The sequence spans 305 residues: Aurasperone B biosynthesis cluster protein A (305 aa).

The signal sequence occupies residues 1–26; it reads MSIFFSIRFWPAAISAAILWLPQVLG. N-linked (GlcNAc...) asparagine glycosylation is found at Asn29, Asn34, Asn64, Asn83, Asn132, Asn183, Asn218, and Asn288.

This sequence belongs to the bfoA family.

Its function is as follows. Part of the gene cluster that mediates the biosynthesis of aurasperone B, a dimeric gamma-naphthopyrone. The first step in the biosynthesis of aurasperone B is the production of gamma-naphthopyrone precursor YWA1 by the non-reducing polyketide synthase albA, via condensation of one acetyl-CoA starter unit with 6 malonyl-CoA units. YWA1 is then methylated by aunE at position C-6 to yield foncesin which is further methylated at position C-8 by aunD to produce fonsecin B. A key enzyme in the biosynthetic pathway is the cytochrome P450 monooxygenase aunB which catalyzes the oxidative dimerization of fonsecin B to aurasperone B. AunB also catalyzes the oxidative dimerization of rubrofusarin B into aurasperone A. This is Aurasperone B biosynthesis cluster protein A from Aspergillus niger (strain ATCC 1015 / CBS 113.46 / FGSC A1144 / LSHB Ac4 / NCTC 3858a / NRRL 328 / USDA 3528.7).